A 378-amino-acid chain; its full sequence is Chaperone protein DnaJ 1 (378 aa).

Positions 4-68 constitute a J domain; sequence DYYGILGVDR…DKRRIVDMGG (65 aa). The CR-type zinc finger occupies 129-211; that stretch reads GVKKDLTLDT…CAGDGRVRAR (83 aa). Positions 142, 145, 159, 162, 185, 188, 199, and 202 each coordinate Zn(2+). CXXCXGXG motif repeat units follow at residues 142–149, 159–166, 185–192, and 199–206; these read CSKCHGSG, CGTCHGSG, CHTCNGTG, and CDECAGDG.

It belongs to the DnaJ family. Homodimer. The cofactor is Zn(2+).

Its subcellular location is the cytoplasm. In terms of biological role, participates actively in the response to hyperosmotic and heat shock by preventing the aggregation of stress-denatured proteins and by disaggregating proteins, also in an autonomous, DnaK-independent fashion. Unfolded proteins bind initially to DnaJ; upon interaction with the DnaJ-bound protein, DnaK hydrolyzes its bound ATP, resulting in the formation of a stable complex. GrpE releases ADP from DnaK; ATP binding to DnaK triggers the release of the substrate protein, thus completing the reaction cycle. Several rounds of ATP-dependent interactions between DnaJ, DnaK and GrpE are required for fully efficient folding. Also involved, together with DnaK and GrpE, in the DNA replication of plasmids through activation of initiation proteins. The protein is Chaperone protein DnaJ 1 of Corynebacterium efficiens (strain DSM 44549 / YS-314 / AJ 12310 / JCM 11189 / NBRC 100395).